Here is a 506-residue protein sequence, read N- to C-terminus: ATP synthase subunit alpha, chloroplastic (506 aa).

170 to 177 (GDRQTGKT) is an ATP binding site.

It belongs to the ATPase alpha/beta chains family. In terms of assembly, F-type ATPases have 2 components, CF(1) - the catalytic core - and CF(0) - the membrane proton channel. CF(1) has five subunits: alpha(3), beta(3), gamma(1), delta(1), epsilon(1). CF(0) has four main subunits: a, b, b' and c.

It localises to the plastid. The protein localises to the chloroplast thylakoid membrane. It carries out the reaction ATP + H2O + 4 H(+)(in) = ADP + phosphate + 5 H(+)(out). Functionally, produces ATP from ADP in the presence of a proton gradient across the membrane. The alpha chain is a regulatory subunit. The protein is ATP synthase subunit alpha, chloroplastic of Euglena gracilis.